The chain runs to 498 residues: ATP synthase subunit beta, chloroplastic (498 aa).

172-179 (GGAGVGKT) contacts ATP.

This sequence belongs to the ATPase alpha/beta chains family. As to quaternary structure, F-type ATPases have 2 components, CF(1) - the catalytic core - and CF(0) - the membrane proton channel. CF(1) has five subunits: alpha(3), beta(3), gamma(1), delta(1), epsilon(1). CF(0) has four main subunits: a(1), b(1), b'(1) and c(9-12).

It localises to the plastid. The protein resides in the chloroplast thylakoid membrane. It catalyses the reaction ATP + H2O + 4 H(+)(in) = ADP + phosphate + 5 H(+)(out). Its function is as follows. Produces ATP from ADP in the presence of a proton gradient across the membrane. The catalytic sites are hosted primarily by the beta subunits. The polypeptide is ATP synthase subunit beta, chloroplastic (Calamus usitatus (Palm tree)).